The following is a 285-amino-acid chain: Ribosomal RNA small subunit methyltransferase A (285 aa).

Residues Asn29, Leu31, Gly56, Glu77, Asp102, and Asn123 each coordinate S-adenosyl-L-methionine.

It belongs to the class I-like SAM-binding methyltransferase superfamily. rRNA adenine N(6)-methyltransferase family. RsmA subfamily.

It is found in the cytoplasm. The enzyme catalyses adenosine(1518)/adenosine(1519) in 16S rRNA + 4 S-adenosyl-L-methionine = N(6)-dimethyladenosine(1518)/N(6)-dimethyladenosine(1519) in 16S rRNA + 4 S-adenosyl-L-homocysteine + 4 H(+). Specifically dimethylates two adjacent adenosines (A1518 and A1519) in the loop of a conserved hairpin near the 3'-end of 16S rRNA in the 30S particle. May play a critical role in biogenesis of 30S subunits. The chain is Ribosomal RNA small subunit methyltransferase A from Clostridium perfringens (strain ATCC 13124 / DSM 756 / JCM 1290 / NCIMB 6125 / NCTC 8237 / Type A).